Consider the following 357-residue polypeptide: Sulfate/thiosulfate import ATP-binding protein CysA (357 aa).

In terms of domain architecture, ABC transporter spans 3-237 (ITIQNLNKHF…PENAFVTEFL (235 aa)). 35–42 (GPSGCGKT) lines the ATP pocket.

Belongs to the ABC transporter superfamily. Sulfate/tungstate importer (TC 3.A.1.6) family. In terms of assembly, the complex is composed of two ATP-binding proteins (CysA), two transmembrane proteins (CysT and CysW) and a solute-binding protein (CysP).

The protein resides in the cell inner membrane. It carries out the reaction sulfate(out) + ATP + H2O = sulfate(in) + ADP + phosphate + H(+). The enzyme catalyses thiosulfate(out) + ATP + H2O = thiosulfate(in) + ADP + phosphate + H(+). Functionally, part of the ABC transporter complex CysAWTP involved in sulfate/thiosulfate import. Responsible for energy coupling to the transport system. The protein is Sulfate/thiosulfate import ATP-binding protein CysA of Neisseria meningitidis serogroup A / serotype 4A (strain DSM 15465 / Z2491).